Consider the following 205-residue polypeptide: Ephrin-A1 (205 aa).

The signal sequence occupies residues 1-18 (MEFFWASLLGLCCSLAAA). Residues 19–151 (NRHTVFWNSS…RLKVMIAGKI (133 aa)) enclose the Ephrin RBD domain. Asn26 is a glycosylation site (N-linked (GlcNAc...) asparagine). 2 disulfide bridges follow: Cys51–Cys92 and Cys80–Cys140. Ser182 is lipidated: GPI-anchor amidated serine. Residues 183-205 (AAPRLFPLAWAVLLLPFLLLQIP) constitute a propeptide, removed in mature form.

Belongs to the ephrin family. In terms of assembly, monomer. Homodimer. Forms heterodimers with EPHA2. Binds to the receptor tyrosine kinases EPHA2, EPHA3, EPHA4, EPHA5, EPHA6 and EPHA7. Also binds with low affinity to EPHA1. Post-translationally, undergoes proteolysis by a metalloprotease to give rise to a soluble monomeric form. In terms of processing, N-Glycosylation is required for binding to EPHA2 receptor and inducing its internalization.

It is found in the cell membrane. The protein localises to the secreted. Functionally, cell surface GPI-bound ligand for Eph receptors, a family of receptor tyrosine kinases which are crucial for migration, repulsion and adhesion during neuronal, vascular and epithelial development. Binds promiscuously Eph receptors residing on adjacent cells, leading to contact-dependent bidirectional signaling into neighboring cells. Plays an important role in angiogenesis and tumor neovascularization. The recruitment of VAV2, VAV3 and PI3-kinase p85 subunit by phosphorylated EPHA2 is critical for EFNA1-induced RAC1 GTPase activation and vascular endothelial cell migration and assembly. Exerts anti-oncogenic effects in tumor cells through activation and down-regulation of EPHA2. Activates EPHA2 by inducing tyrosine phosphorylation which leads to its internalization and degradation. Acts as a negative regulator in the tumorigenesis of gliomas by down-regulating EPHA2 and FAK. Can evoke collapse of embryonic neuronal growth cone and regulates dendritic spine morphogenesis. This chain is Ephrin-A1 (EFNA1), found in Bos taurus (Bovine).